Reading from the N-terminus, the 410-residue chain is Inositol hexakisphosphate kinase 3 (410 aa).

211-219 (PCVLDLKMG) provides a ligand contact to substrate. Positions 333-358 (QEPPERAPGSPHPHEAPQAAHGSSPG) are disordered.

The protein belongs to the inositol phosphokinase (IPK) family. In terms of tissue distribution, detected in brain.

Its subcellular location is the cytoplasm. The enzyme catalyses 1D-myo-inositol hexakisphosphate + ATP = 5-diphospho-1D-myo-inositol 1,2,3,4,6-pentakisphosphate + ADP. The catalysed reaction is 1-diphospho-1D-myo-inositol 2,3,4,5,6-pentakisphosphate + ATP + H(+) = 1,5-bis(diphospho)-1D-myo-inositol 2,3,4,6-tetrakisphosphate + ADP. Converts inositol hexakisphosphate (InsP6) to diphosphoinositol pentakisphosphate (InsP7/PP-InsP5). Converts 1,3,4,5,6-pentakisphosphate (InsP5) to PP-InsP4. The polypeptide is Inositol hexakisphosphate kinase 3 (IP6K3) (Homo sapiens (Human)).